The primary structure comprises 340 residues: UDP-3-O-acylglucosamine N-acyltransferase (340 aa).

His-238 acts as the Proton acceptor in catalysis.

It belongs to the transferase hexapeptide repeat family. LpxD subfamily. As to quaternary structure, homotrimer.

The enzyme catalyses a UDP-3-O-[(3R)-3-hydroxyacyl]-alpha-D-glucosamine + a (3R)-hydroxyacyl-[ACP] = a UDP-2-N,3-O-bis[(3R)-3-hydroxyacyl]-alpha-D-glucosamine + holo-[ACP] + H(+). It participates in bacterial outer membrane biogenesis; LPS lipid A biosynthesis. Its function is as follows. Catalyzes the N-acylation of UDP-3-O-acylglucosamine using 3-hydroxyacyl-ACP as the acyl donor. Is involved in the biosynthesis of lipid A, a phosphorylated glycolipid that anchors the lipopolysaccharide to the outer membrane of the cell. The protein is UDP-3-O-acylglucosamine N-acyltransferase of Shewanella denitrificans (strain OS217 / ATCC BAA-1090 / DSM 15013).